The sequence spans 514 residues: 2,3-bisphosphoglycerate-independent phosphoglycerate mutase (514 aa).

Mn(2+)-binding residues include aspartate 14 and serine 64. The Phosphoserine intermediate role is filled by serine 64. Substrate-binding positions include histidine 125, 155 to 156, arginine 187, arginine 193, 263 to 266, and lysine 336; these read RD and RADR. Mn(2+)-binding residues include aspartate 403, histidine 407, aspartate 444, histidine 445, and histidine 463.

Belongs to the BPG-independent phosphoglycerate mutase family. In terms of assembly, monomer. Requires Mn(2+) as cofactor.

It carries out the reaction (2R)-2-phosphoglycerate = (2R)-3-phosphoglycerate. The protein operates within carbohydrate degradation; glycolysis; pyruvate from D-glyceraldehyde 3-phosphate: step 3/5. Functionally, catalyzes the interconversion of 2-phosphoglycerate and 3-phosphoglycerate. The polypeptide is 2,3-bisphosphoglycerate-independent phosphoglycerate mutase (Salmonella typhi).